The chain runs to 296 residues: tRNA dimethylallyltransferase (296 aa).

2-9 contributes to the ATP binding site; that stretch reads GPTASGKT. 4-9 serves as a coordination point for substrate; it reads TASGKT. Interaction with substrate tRNA stretches follow at residues 27–30, 151–155, and 232–237; these read DSAL, QRLSR, and RCVGYR.

The protein belongs to the IPP transferase family. As to quaternary structure, monomer. Requires Mg(2+) as cofactor.

The enzyme catalyses adenosine(37) in tRNA + dimethylallyl diphosphate = N(6)-dimethylallyladenosine(37) in tRNA + diphosphate. Functionally, catalyzes the transfer of a dimethylallyl group onto the adenine at position 37 in tRNAs that read codons beginning with uridine, leading to the formation of N6-(dimethylallyl)adenosine (i(6)A). This Shewanella sp. (strain MR-4) protein is tRNA dimethylallyltransferase.